We begin with the raw amino-acid sequence, 542 residues long: 1-aminocyclopropane-1-carboxylate synthase 6 (542 aa).

The segment at 1–28 (MRRSGNGGAAKKKKKRSASAASERRPRA) is disordered. N6-(pyridoxal phosphate)lysine is present on lysine 379.

The protein belongs to the class-I pyridoxal-phosphate-dependent aminotransferase family. It depends on pyridoxal 5'-phosphate as a cofactor. Expressed in leaves.

It localises to the plastid. Its subcellular location is the amyloplast membrane. The enzyme catalyses S-adenosyl-L-methionine = 1-aminocyclopropane-1-carboxylate + S-methyl-5'-thioadenosine + H(+). It functions in the pathway alkene biosynthesis; ethylene biosynthesis via S-adenosyl-L-methionine; ethylene from S-adenosyl-L-methionine: step 1/2. In terms of biological role, catalyzes the formation of 1-aminocyclopropane-1-carboxylate, a direct precursor of ethylene in higher plants. Required for the regulation of starch grain size in endosperm. The polypeptide is 1-aminocyclopropane-1-carboxylate synthase 6 (Oryza sativa subsp. japonica (Rice)).